Reading from the N-terminus, the 188-residue chain is dCTP deaminase (188 aa).

Residues Lys-111–Arg-116, Thr-135–Glu-137, Gln-156, Tyr-170, and Gln-180 each bind dCTP. Glu-137 serves as the catalytic Proton donor/acceptor.

It belongs to the dCTP deaminase family. In terms of assembly, homotrimer.

The enzyme catalyses dCTP + H2O + H(+) = dUTP + NH4(+). Its pathway is pyrimidine metabolism; dUMP biosynthesis; dUMP from dCTP (dUTP route): step 1/2. Catalyzes the deamination of dCTP to dUTP. The polypeptide is dCTP deaminase (Acidithiobacillus ferrooxidans (strain ATCC 23270 / DSM 14882 / CIP 104768 / NCIMB 8455) (Ferrobacillus ferrooxidans (strain ATCC 23270))).